The sequence spans 156 residues: Arginine repressor (156 aa).

The protein belongs to the ArgR family.

The protein resides in the cytoplasm. Its pathway is amino-acid biosynthesis; L-arginine biosynthesis [regulation]. Its function is as follows. Regulates arginine biosynthesis genes. The protein is Arginine repressor of Shewanella baltica (strain OS223).